The primary structure comprises 1018 residues: D-2-hydroxyglutarate dehydrogenase (1018 aa).

Residues 48–281 (YQLLPDAVVF…TEARLDITRL (234 aa)) form the FAD-binding PCMH-type domain. (R)-2-hydroxyglutarate is bound by residues Arg-402 and His-500. The 4Fe-4S ferredoxin-type domain maps to 662 to 695 (FSHEVKEAMSGCLACKACSTQCPIKIDVPEFRSR). Residues Cys-673, Cys-676, Cys-679, and Cys-683 each coordinate [4Fe-4S] cluster.

The protein in the N-terminal section; belongs to the FAD-binding oxidoreductase/transferase type 4 family. As to quaternary structure, homotetramer. [4Fe-4S] cluster serves as cofactor. Requires FAD as cofactor.

It carries out the reaction (R)-2-hydroxyglutarate + A = 2-oxoglutarate + AH2. Activity is completely inhibited by the addition of 0.5 mM Mn(2+), Ni(2+), or Co(2+) and partially inhibited by 0.5 mM Zn(2+). Functionally, catalyzes the oxidation of D-2-hydroxyglutarate (D-2-HGA) to 2-oxoglutarate. Appears to be the only D2HGDH in E.coli, providing the way to recycle D-2-HGA produced during L-serine synthesis by SerA, by converting it back to 2-oxoglutarate. The physiological molecule that functions as the primary electron acceptor during D-2-HGA oxidation by YdiJ in E.coli is unknown. Shows strict substrate specificity towards D-2-HGA, since it has no detectable activity on L-2-hydroxyglutarate, L-malate, D-malate, L-lactate, D-lactate, L-tartrate, D-tartrate, L-glycerate, D-glycerate, glutarate, or pyruvate. In Escherichia coli (strain K12), this protein is D-2-hydroxyglutarate dehydrogenase (ydiJ).